The following is a 587-amino-acid chain: Thioredoxin domain-containing protein 3 (587 aa).

A Thioredoxin domain is found at 2–119 (ASKKREVQLQ…VIALIDEEKK (118 aa)). Residues C39 and C42 are joined by a disulfide bond. 3 NDK regions span residues 157–255 (MAVI…PLEE), 313–453 (VQRT…STLA), and 454–587 (LIKP…NFEN).

In the C-terminal section; belongs to the NDK family. In terms of assembly, monomer. Testis-specific.

Its subcellular location is the cytoplasm. Its function is as follows. Probably required during the final stages of sperm tail maturation in the testis and/or epididymis, where extensive disulfide bonding of fibrous sheath (FS) proteins occurs. In vitro, it has neither nucleoside diphosphate kinase (NDPK) activity nor reducing activity on disulfide bonds. Exhibits a 3'-5' exonuclease activity with a preference for single-stranded DNA, suggesting roles in DNA proofreading and repair. The protein is Thioredoxin domain-containing protein 3 (Nme8) of Rattus norvegicus (Rat).